We begin with the raw amino-acid sequence, 307 residues long: Probable E3 SUMO-protein ligase RNF212 (307 aa).

An RING-type zinc finger spans residues 7–46 (CNRCFQSPHRKSSFSLTSCGHVYCHSCLLKGTKNECVICQ). Positions 91–124 (RRRLVAFYQEKISQLEESLRKSVLQIKQLQSMRS) form a coiled coil. The segment at 164–291 (LTPPARKPEM…KMSPFLPSTP (128 aa)) is disordered. 3 stretches are compositionally biased toward polar residues: residues 202–213 (LSLTPSHASMTK), 233–252 (SQLS…SSWT), and 259–271 (ISIS…QCAG).

In terms of tissue distribution, specifically expressed in meiocytes of the gonads.

It localises to the nucleus. Its subcellular location is the chromosome. It participates in protein modification; protein sumoylation. SUMO E3 ligase that acts as a regulator of crossing-over during meiosis: required to couple chromosome synapsis to the formation of crossover-specific recombination complexes. Localizes to recombination sites and stabilizes meiosis-specific recombination factors, such as MutS-gamma complex proteins (MSH4 and MSH5) and TEX11. May mediate sumoylation of target proteins MSH4 and/or MSH5, leading to enhance their binding to recombination sites. Acts as a limiting factor for crossover designation and/or reinforcement and plays an antagonist role with CCNB1IP1/HEI10 in the regulation of meiotic recombination. This is Probable E3 SUMO-protein ligase RNF212 (Rnf212) from Mus musculus (Mouse).